A 258-amino-acid polypeptide reads, in one-letter code: Imidazole glycerol phosphate synthase subunit HisF (258 aa).

Residues Asp-11 and Asp-130 contribute to the active site.

It belongs to the HisA/HisF family. Heterodimer of HisH and HisF.

The protein localises to the cytoplasm. The enzyme catalyses 5-[(5-phospho-1-deoxy-D-ribulos-1-ylimino)methylamino]-1-(5-phospho-beta-D-ribosyl)imidazole-4-carboxamide + L-glutamine = D-erythro-1-(imidazol-4-yl)glycerol 3-phosphate + 5-amino-1-(5-phospho-beta-D-ribosyl)imidazole-4-carboxamide + L-glutamate + H(+). It functions in the pathway amino-acid biosynthesis; L-histidine biosynthesis; L-histidine from 5-phospho-alpha-D-ribose 1-diphosphate: step 5/9. IGPS catalyzes the conversion of PRFAR and glutamine to IGP, AICAR and glutamate. The HisF subunit catalyzes the cyclization activity that produces IGP and AICAR from PRFAR using the ammonia provided by the HisH subunit. In Methylorubrum extorquens (strain PA1) (Methylobacterium extorquens), this protein is Imidazole glycerol phosphate synthase subunit HisF.